The chain runs to 177 residues: O-acetyl-ADP-ribose deacetylase (177 aa).

The Macro domain maps to 1-175; that stretch reads MNSRIHVIHG…LYQRLLTQQG (175 aa). Residues 11–12, Asn25, 33–35, and 122–126 contribute to the substrate site; these read DI, GVD, and STGVY. Catalysis depends on Asp35, which acts as the Proton acceptor.

Belongs to the MacroD-type family. YmdB subfamily. In terms of assembly, homodimer. Interacts with RNase III.

The enzyme catalyses 3''-O-acetyl-ADP-D-ribose + H2O = ADP-D-ribose + acetate + H(+). It carries out the reaction 2''-O-acetyl-ADP-D-ribose + H2O = ADP-D-ribose + acetate + H(+). In terms of biological role, deacetylates O-acetyl-ADP ribose to yield ADP-ribose and free acetate. Down-regulates ribonuclease 3 (RNase III) activity. Acts by interacting directly with the region of the ribonuclease that is required for dimerization/activation. The chain is O-acetyl-ADP-ribose deacetylase from Citrobacter rodentium (strain ICC168) (Citrobacter freundii biotype 4280).